The sequence spans 151 residues: Large ribosomal subunit protein bL9 (151 aa).

Belongs to the bacterial ribosomal protein bL9 family.

Functionally, binds to the 23S rRNA. In Francisella tularensis subsp. tularensis (strain FSC 198), this protein is Large ribosomal subunit protein bL9.